A 62-amino-acid polypeptide reads, in one-letter code: HVVAAITALKERGGSSMKKQSVFIKKALKSGVEKGTLVQVKGKGASGSFKLGKKPAAGRTDA.

Positions 1 to 53 constitute an H15 domain; it reads HVVAAITALKERGGSSMKKQSVFIKKALKSGVEKGTLVQVKGKGASGSFKLGK.

It belongs to the histone H1/H5 family.

It is found in the nucleus. It localises to the chromosome. Histones H1 are necessary for the condensation of nucleosome chains into higher-order structures. The chain is Histone H1.2, embryonic from Parechinus angulosus (Angulate sea urchin).